Consider the following 105-residue polypeptide: Small ribosomal subunit protein eS25 (105 aa).

This sequence belongs to the eukaryotic ribosomal protein eS25 family. Component of the small ribosomal subunit. Mature ribosomes consist of a small (40S) and a large (60S) subunit. The 40S subunit contains about 32 different proteins and 1 molecule of RNA (18S). The 60S subunit contains 45 different proteins and 3 molecules of RNA (25S, 5.8S and 5S).

The protein localises to the cytoplasm. Functionally, component of the ribosome, a large ribonucleoprotein complex responsible for the synthesis of proteins in the cell. The small ribosomal subunit (SSU) binds messenger RNAs (mRNAs) and translates the encoded message by selecting cognate aminoacyl-transfer RNA (tRNA) molecules. The large subunit (LSU) contains the ribosomal catalytic site termed the peptidyl transferase center (PTC), which catalyzes the formation of peptide bonds, thereby polymerizing the amino acids delivered by tRNAs into a polypeptide chain. The nascent polypeptides leave the ribosome through a tunnel in the LSU and interact with protein factors that function in enzymatic processing, targeting, and the membrane insertion of nascent chains at the exit of the ribosomal tunnel. The polypeptide is Small ribosomal subunit protein eS25 (RPS25B) (Candida albicans (strain SC5314 / ATCC MYA-2876) (Yeast)).